Reading from the N-terminus, the 368-residue chain is Cyclin-dependent kinase 2 (368 aa).

The Protein kinase domain occupies Phe-45–Phe-330. ATP-binding positions include Ile-51–Val-59 and Lys-74. Residue Asp-170 is the Proton acceptor of the active site. Mg(2+) is bound by residues Asn-175 and Asp-188.

The protein belongs to the protein kinase superfamily. CMGC Ser/Thr protein kinase family. CDC2/CDKX subfamily. In terms of assembly, interacts with cye-1; the interaction likely regulates cdk-2 activity and is probably required for gld-1 phosphorylation. It depends on Mg(2+) as a cofactor.

The catalysed reaction is L-seryl-[protein] + ATP = O-phospho-L-seryl-[protein] + ADP + H(+). The enzyme catalyses L-threonyl-[protein] + ATP = O-phospho-L-threonyl-[protein] + ADP + H(+). Serine/threonine-protein kinase which, in association with cye-1, regulates proliferation, quiescent state and cell fate during the development of several cell lineages. In the embryo, initiates the establishment of cell polarity through the recruitment of the centrosomal proteins spd-2 and spd-5 during prophase. Phosphorylation and inhibition of the translational repressor gld-1 by the cdk-2/cye-1 complex regulates the pool of germline stem cells and the size of the mitotic zone in the gonads by preventing entry into meiosis. This is Cyclin-dependent kinase 2 from Caenorhabditis elegans.